We begin with the raw amino-acid sequence, 172 residues long: Adenine phosphoribosyltransferase (172 aa).

It belongs to the purine/pyrimidine phosphoribosyltransferase family. In terms of assembly, homodimer.

It is found in the cytoplasm. It carries out the reaction AMP + diphosphate = 5-phospho-alpha-D-ribose 1-diphosphate + adenine. The protein operates within purine metabolism; AMP biosynthesis via salvage pathway; AMP from adenine: step 1/1. In terms of biological role, catalyzes a salvage reaction resulting in the formation of AMP, that is energically less costly than de novo synthesis. The sequence is that of Adenine phosphoribosyltransferase from Staphylococcus aureus (strain bovine RF122 / ET3-1).